The primary structure comprises 207 residues: Octanoyltransferase (207 aa).

The BPL/LPL catalytic domain occupies 27–202 (GETPDELWIV…HLETRLARPQ (176 aa)). Residues 66–73 (RGGQITYH), 133–135 (SLG), and 146–148 (GLS) each bind substrate. Cys164 (acyl-thioester intermediate) is an active-site residue.

The protein belongs to the LipB family.

The protein resides in the cytoplasm. The enzyme catalyses octanoyl-[ACP] + L-lysyl-[protein] = N(6)-octanoyl-L-lysyl-[protein] + holo-[ACP] + H(+). It functions in the pathway protein modification; protein lipoylation via endogenous pathway; protein N(6)-(lipoyl)lysine from octanoyl-[acyl-carrier-protein]: step 1/2. Functionally, catalyzes the transfer of endogenously produced octanoic acid from octanoyl-acyl-carrier-protein onto the lipoyl domains of lipoate-dependent enzymes. Lipoyl-ACP can also act as a substrate although octanoyl-ACP is likely to be the physiological substrate. In Laribacter hongkongensis (strain HLHK9), this protein is Octanoyltransferase.